A 354-amino-acid polypeptide reads, in one-letter code: Magnesium-protoporphyrin IX monomethyl ester [oxidative] cyclase (354 aa).

The protein belongs to the AcsF family. Requires Fe cation as cofactor.

The protein localises to the plastid. It is found in the chloroplast. It catalyses the reaction Mg-protoporphyrin IX 13-monomethyl ester + 3 NADPH + 3 O2 + 2 H(+) = 3,8-divinyl protochlorophyllide a + 3 NADP(+) + 5 H2O. It participates in porphyrin-containing compound metabolism; chlorophyll biosynthesis (light-independent). In terms of biological role, catalyzes the formation of the isocyclic ring in chlorophyll biosynthesis. Mediates the cyclase reaction, which results in the formation of divinylprotochlorophyllide (Pchlide) characteristic of all chlorophylls from magnesium-protoporphyrin IX 13-monomethyl ester (MgPMME). This Cyanidium caldarium (Red alga) protein is Magnesium-protoporphyrin IX monomethyl ester [oxidative] cyclase.